The primary structure comprises 242 residues: Tropomyosin-1 (242 aa).

2 disordered regions span residues 1 to 31 (MDAIKKKMSAMKTKLEEADKQAQDAEDELTA) and 65 to 96 (TSLTEKYNEEEKKAEEGRRAHKELENRGQTDY). A coiled-coil region spans residues 1–242 (MDAIKKKMSA…DELLLELASM (242 aa)). 2 stretches are compositionally biased toward basic and acidic residues: residues 13-23 (TKLEEADKQAQ) and 70-96 (KYNEEEKKAEEGRRAHKELENRGQTDY).

It belongs to the tropomyosin family. In terms of assembly, homodimer. In terms of tissue distribution, expressed ubiquitously.

The chain is Tropomyosin-1 (TPM1) from Podocoryna carnea (Hydrozoan).